Here is a 146-residue protein sequence, read N- to C-terminus: Large ribosomal subunit protein uL15 (146 aa).

The tract at residues 1–58 (MKLNELSPPKGARTARKRKGRGPGSGLGKTAGKGHKGQKARSGGGVRPGFEGGQMPVH) is disordered. 2 stretches are compositionally biased toward gly residues: residues 22–31 (GPGSGLGKTA) and 42–52 (SGGGVRPGFEG).

It belongs to the universal ribosomal protein uL15 family. Part of the 50S ribosomal subunit.

Functionally, binds to the 23S rRNA. This chain is Large ribosomal subunit protein uL15, found in Desulfatibacillum aliphaticivorans.